We begin with the raw amino-acid sequence, 144 residues long: Large-conductance mechanosensitive channel (144 aa).

Transmembrane regions (helical) follow at residues 14–34 (VLDM…VTSF) and 81–101 (GTFL…FLII).

It belongs to the MscL family. In terms of assembly, homopentamer.

It is found in the cell inner membrane. Functionally, channel that opens in response to stretch forces in the membrane lipid bilayer. May participate in the regulation of osmotic pressure changes within the cell. The polypeptide is Large-conductance mechanosensitive channel (Bdellovibrio bacteriovorus (strain ATCC 15356 / DSM 50701 / NCIMB 9529 / HD100)).